The primary structure comprises 243 residues: Ribonuclease 3 (243 aa).

An RNase III domain is found at 10-146; it reads VNRFRKRFDT…FIGALYLDQG (137 aa). A Mg(2+)-binding site is contributed by Glu59. The active site involves Asp63. Asp132 and Glu135 together coordinate Mg(2+). Glu135 is an active-site residue. One can recognise a DRBM domain in the interval 172-241; it reads DFKTQFQEYV…AKSAYKQLKQ (70 aa). The segment covering 219-231 has biased composition (basic and acidic residues); sequence GKGKTKKESEQRA. A disordered region spans residues 219–243; it reads GKGKTKKESEQRAAKSAYKQLKQIK.

The protein belongs to the ribonuclease III family. Homodimer. The cofactor is Mg(2+).

Its subcellular location is the cytoplasm. It catalyses the reaction Endonucleolytic cleavage to 5'-phosphomonoester.. Functionally, digests double-stranded RNA. Involved in the processing of primary rRNA transcript to yield the immediate precursors to the large and small rRNAs (23S and 16S). Processes some mRNAs, and tRNAs when they are encoded in the rRNA operon. Processes pre-crRNA and tracrRNA of type II CRISPR loci if present in the organism. The protein is Ribonuclease 3 of Staphylococcus aureus (strain Mu3 / ATCC 700698).